We begin with the raw amino-acid sequence, 347 residues long: MIVQLICTVCFLAVNTFHVRSSFDFLKADDMGEINQTLVSEFLLLGLSGYPKIEIVYFALILVMYLVILIGNGVLIIASIFDSHFHTPMYFFLGNLSFLDICYTSSSVPSTLVSLISKKRNISFSGCAVQMFFGFAMGSTECLLLGMMAFDRYVAICNPLRYPIILSKVAYVLMASVSWLSGGINSAVQTLLAMRLPFCGNNIINHFACEILAVLKLACADISLNIITMVISNMAFLVLPLMVIFFSYMFILYTILQMNSATGRRKAFSTCSAHLTVVIIFYGTIFFMYAKPKSQDLIGEEKLQALDKLISLFYGVVTPMLNPILYSLRNKDVKAAVKYLLNKKPIH.

The Extracellular segment spans residues 1–55; it reads MIVQLICTVCFLAVNTFHVRSSFDFLKADDMGEINQTLVSEFLLLGLSGYPKIEI. N-linked (GlcNAc...) asparagine glycosylation occurs at asparagine 35. The chain crosses the membrane as a helical span at residues 56–76; that stretch reads VYFALILVMYLVILIGNGVLI. At 77–84 the chain is on the cytoplasmic side; the sequence is IASIFDSH. A helical transmembrane segment spans residues 85–105; it reads FHTPMYFFLGNLSFLDICYTS. Residues 106–129 are Extracellular-facing; the sequence is SSVPSTLVSLISKKRNISFSGCAV. Cysteine 127 and cysteine 219 are disulfide-bonded. Residues 130–150 traverse the membrane as a helical segment; it reads QMFFGFAMGSTECLLLGMMAF. Over 151 to 169 the chain is Cytoplasmic; the sequence is DRYVAICNPLRYPIILSKV. A helical transmembrane segment spans residues 170-190; sequence AYVLMASVSWLSGGINSAVQT. Residues 191 to 227 lie on the Extracellular side of the membrane; sequence LLAMRLPFCGNNIINHFACEILAVLKLACADISLNII. A helical transmembrane segment spans residues 228–247; sequence TMVISNMAFLVLPLMVIFFS. Residues 248–267 lie on the Cytoplasmic side of the membrane; the sequence is YMFILYTILQMNSATGRRKA. The chain crosses the membrane as a helical span at residues 268-288; that stretch reads FSTCSAHLTVVIIFYGTIFFM. Over 289-307 the chain is Extracellular; that stretch reads YAKPKSQDLIGEEKLQALD. Residues 308–328 traverse the membrane as a helical segment; that stretch reads KLISLFYGVVTPMLNPILYSL. Topologically, residues 329–347 are cytoplasmic; the sequence is RNKDVKAAVKYLLNKKPIH.

This sequence belongs to the G-protein coupled receptor 1 family.

Its subcellular location is the cell membrane. Its function is as follows. Odorant receptor. In Homo sapiens (Human), this protein is Olfactory receptor 13C3 (OR13C3).